A 164-amino-acid polypeptide reads, in one-letter code: Phosphopantetheine adenylyltransferase (164 aa).

Ser9 provides a ligand contact to substrate. Residues 9–10 (SF) and His17 each bind ATP. Residues Lys41, Leu73, and Lys87 each coordinate substrate. Residues 88-90 (GLR), Glu98, and 122-128 (YSYLSSS) contribute to the ATP site.

Belongs to the bacterial CoaD family. As to quaternary structure, homohexamer. The cofactor is Mg(2+).

The protein localises to the cytoplasm. The enzyme catalyses (R)-4'-phosphopantetheine + ATP + H(+) = 3'-dephospho-CoA + diphosphate. Its pathway is cofactor biosynthesis; coenzyme A biosynthesis; CoA from (R)-pantothenate: step 4/5. Functionally, reversibly transfers an adenylyl group from ATP to 4'-phosphopantetheine, yielding dephospho-CoA (dPCoA) and pyrophosphate. The protein is Phosphopantetheine adenylyltransferase of Rhodococcus jostii (strain RHA1).